A 998-amino-acid polypeptide reads, in one-letter code: Bifunctional glutamine synthetase adenylyltransferase/adenylyl-removing enzyme (998 aa).

The segment at 1–487 (MVVTKPATQR…LHAKLFYQPL (487 aa)) is adenylyl removase. The tract at residues 492-998 (GPAGLEIRHG…KAVVRKVFGS (507 aa)) is adenylyl transferase.

The protein belongs to the GlnE family. The cofactor is Mg(2+).

The enzyme catalyses [glutamine synthetase]-O(4)-(5'-adenylyl)-L-tyrosine + phosphate = [glutamine synthetase]-L-tyrosine + ADP. It carries out the reaction [glutamine synthetase]-L-tyrosine + ATP = [glutamine synthetase]-O(4)-(5'-adenylyl)-L-tyrosine + diphosphate. Involved in the regulation of glutamine synthetase GlnA, a key enzyme in the process to assimilate ammonia. When cellular nitrogen levels are high, the C-terminal adenylyl transferase (AT) inactivates GlnA by covalent transfer of an adenylyl group from ATP to specific tyrosine residue of GlnA, thus reducing its activity. Conversely, when nitrogen levels are low, the N-terminal adenylyl removase (AR) activates GlnA by removing the adenylyl group by phosphorolysis, increasing its activity. The regulatory region of GlnE binds the signal transduction protein PII (GlnB) which indicates the nitrogen status of the cell. This chain is Bifunctional glutamine synthetase adenylyltransferase/adenylyl-removing enzyme, found in Mycobacterium avium (strain 104).